The chain runs to 881 residues: MLEPFFKNYFNQSLTKYNSQVDAINNFGPMLSNLSDDEIRQRVQILKQQLLSNKNEADIICEVFAIVREATFRTLDIKHFDVQLIGGLVLNDGQIAEMKTGEGKTIVALLPTFLNALYGKGVHVVTVNDYLARRDAETVGRVHRFLGLTVGLIQEDMSPEERKQNYQCDVVYVTNNELGFDYLRDNMAFTQEEVVQRPLFYCVVDEVDSILIDEARTPLIISGPSEAPTQKYLQTSQLARVLQKNIHYIIDEKNQVVKLTDEGTLFCEQALKIADLYSPSDPWISYVLNSIKAKELFIRNTHYIVNVEEEVIIVDEFTGRTMAGRRWSDGLHQAIESKENLPIQDESQTLASITYQNLFLLYDKLSGMTGTAKTEELEFEKIYGLKVIPIPTHRDVKRKDFPDLVYKNQYLKWQAIANECIKMNEIDRPVLIGTTTIEKSELLAALLSEYNVPYRLLNARPENIESEAEIVSQAGCRGAITISTNMAGRGTDIALGGNLESLLKVKLKKFISDLVSADFSTVLKSAQFDEFLVSFVPVFETFGLSKLNESSVREDLLEYLNEGIIPDRSDITDFITAYNSFLKERAAILLEEKTLITKLGGLHVIGTERHESRRIDNQLRGRSGRQGDPGSSRFFLSLDDKLLRLFGGDQILNLLQNIGLEDDAPIQSPILTKSLESAQKKVEVYYFDSRKQLFEYDQALTMQRNGIYSERKRVLEKESLRDWIIEYGERSLYDITLAFSTNTNLALDKFFALKTQELLGMPYQVKWESAKGDINVLLNNLKHQFQVSYTLKEAQLEAIEPGIMRELERSFLLQQIDFSWKEHLQKISALRDSIRWRSYGQRDPLTDYKKESYSTFVTMLNRIRHQVIYFIFRSKITIDFE.

ATP is bound by residues glutamine 83, 101–105 (GEGKT), and aspartate 492.

It belongs to the SecA family.

Its subcellular location is the plastid. The protein localises to the chloroplast stroma. It is found in the chloroplast thylakoid membrane. It catalyses the reaction ATP + H2O + cellular proteinSide 1 = ADP + phosphate + cellular proteinSide 2.. Its function is as follows. Has a central role in coupling the hydrolysis of ATP to the transfer of proteins across the thylakoid membrane. The polypeptide is Protein translocase subunit SecA (Emiliania huxleyi (Coccolithophore)).